The sequence spans 592 residues: MLIRCFHIKMALVTCFHSMLFLSAVVFIFSLDVNIRGVEASHQVFPELQSVSAVNVQLVHRTGYHFQPKKHWINDPNGPMYYKGFYHLFYQYNPKGAVWGNIVWAHSISKDLINWVALEPAIFPSKPFDKYGCWSGSATVLPGGKPVIMYTGIVTPSPVNTQVQNFAVPANYSDPYLREWIKPDNNPIVRARSENSSSFRDPTTAWFDGVHWKILVGSRRKHRGIAYLYRSRNFLKWTKAKHPLHSKDRTGMWECLDFYPVAPKGMNGLDTSVTGQDIKHVLKVSLYSTRYEYYTVGEYDRDNDIYVPDNTSVDGWAGLRYDYGNFYASKTFFDPDKQRRILWGWANESDSKQDDVQKGWAGIQLIPRKLWLDPNGKQLIQWPIEEIQLLRGQNVHMGSQVLNTGEHIEVKGVTAAQADVDATFSFKSLDRAEWFDPNWAKLDALDVCDWMGSTVRGGLGPFGFLTLASEKLEEYTPVFFRVFKTKDKLKVLMCSDAKRSSTTAEGLYKPPFAGYVDVDLSDKKISLRSLIDNSVVESFGAHGRTCITSRVYPKIAIYNNAHVFVFNNGTEAITIDSLDAWSMKAPSLMNNN.

A signal peptide spans 1-40; sequence MLIRCFHIKMALVTCFHSMLFLSAVVFIFSLDVNIRGVEA. Residue aspartate 75 is part of the active site. N-linked (GlcNAc...) asparagine glycans are attached at residues asparagine 171, asparagine 195, asparagine 310, asparagine 347, and asparagine 568.

Belongs to the glycosyl hydrolase 32 family.

It localises to the secreted. The protein resides in the cell wall. The enzyme catalyses Hydrolysis of terminal non-reducing beta-D-fructofuranoside residues in beta-D-fructofuranosides.. Functionally, may play an important role in phloem unloading and in stress response. This Daucus carota (Wild carrot) protein is Beta-fructofuranosidase, insoluble isoenzyme 2 (INV2).